The primary structure comprises 767 residues: MSTLTSVSGFPRIGQNRELKKIIEGYWKGANDLAAVKATAAELRAKHWKLQQAAGIDLIPSNDFSYYDQMLDTAILLNVIPQRYARLSFDNQEDTLFAMARGYQGDKGDVTALPMKKWFTTNYHYLVPEVESAAEIKLNSTKPFDEFNEAKALGIDTKPVFIGPYTFLKLARTPEATELELDKGLVNAVAAVYVEVLAKFNELGAAWVQLDEPYLVLDKEPGDVELFKTLYTKILSAKGNVKVLLNTYFGHIADVYETVNLLGFDGIGLDLNEGREENLEAVAKYGVASNTTIFAGVINGRNIWRNNYATSLGLVDALKQVTANVAVSTASSLLHVPFSTEGETGIPAEDLKHFAFAVQKLDELKEVAALADATEDEKKASAALAANQALFDGTRVAADPAVAERIGKLSDADYVRQPAREERQALQREALGLPLLPTTTIGSFPQTKEIRAERAKLRKGEVTKEAYDEFIKAQIDAVIKKQEEIGLDVLVHGEFERNDMVEYFGQNLNGFLFTKNAWVQSYGTRCVKPPIVWGDVSRANPITVEWSAYAQSKTDHVMKGMLTGPVTILNWSWPREDITHEEQTKQLALAIRDEVLDLEAAGIKVIQIDEAALREKLPLRKSDWHVKYLDWAVPAFRLVHSAVKPTTQIHTHMCYSEFNDIIRDIDAMDADVISFEASRGDLVVLDAIHDAHFETEAGPGVYDIHSPRIPSEKEIEDRIYEILDKMDVKKVWINPDCGLKTRGNAETWPSLENLVAAAKAVRAKLDK.

Residues 17 to 20 (RELK) and Lys117 each bind 5-methyltetrahydropteroyltri-L-glutamate. L-homocysteine is bound by residues 441 to 443 (IGS) and Glu494. L-methionine-binding positions include 441-443 (IGS) and Glu494. Residues 525 to 526 (RC) and Trp571 each bind 5-methyltetrahydropteroyltri-L-glutamate. Residue Asp609 participates in L-homocysteine binding. Asp609 is a binding site for L-methionine. Glu615 provides a ligand contact to 5-methyltetrahydropteroyltri-L-glutamate. Residues His652, Cys654, and Glu676 each coordinate Zn(2+). The Proton donor role is filled by His705. Residue Cys737 coordinates Zn(2+).

It belongs to the vitamin-B12 independent methionine synthase family. Zn(2+) is required as a cofactor.

The enzyme catalyses 5-methyltetrahydropteroyltri-L-glutamate + L-homocysteine = tetrahydropteroyltri-L-glutamate + L-methionine. It functions in the pathway amino-acid biosynthesis; L-methionine biosynthesis via de novo pathway; L-methionine from L-homocysteine (MetE route): step 1/1. Functionally, catalyzes the transfer of a methyl group from 5-methyltetrahydrofolate to homocysteine resulting in methionine formation. This Bifidobacterium longum (strain NCC 2705) protein is 5-methyltetrahydropteroyltriglutamate--homocysteine methyltransferase.